The primary structure comprises 120 residues: UPF0102 protein Moth_0988 (120 aa).

Belongs to the UPF0102 family.

The polypeptide is UPF0102 protein Moth_0988 (Moorella thermoacetica (strain ATCC 39073 / JCM 9320)).